Here is a 405-residue protein sequence, read N- to C-terminus: Envelope glycoprotein M (405 aa).

At 1 to 17 (MKSSKNDTFVYRTWFKT) the chain is on the intravirion side. The chain crosses the membrane as a helical span at residues 18 to 38 (LVVYFVMFVMSAVVPITAMFP). The Virion surface portion of the chain corresponds to 39–76 (NLGYPCYFNALVDYGALNLTNYNLAHHLTPTLYLEPPE). The chain crosses the membrane as a helical span at residues 77–97 (MFVYITLVFIADCVAFIYYAC). Over 98-121 (GEVALIKARKKVSGLTDLSAWVSA) the chain is Intravirion. The helical transmembrane segment at 122–142 (VGSPTVLFLAILKLWSIQVFI) threads the bilayer. At 143 to 149 (QVLSYKH) the chain is on the virion surface side. Residues 150–170 (VFLSAFVYFLHFLASVLHACA) traverse the membrane as a helical segment. Residues 171 to 192 (CVTRFSPVWVVKAQDNSIPQDT) are Intravirion-facing. The chain crosses the membrane as a helical span at residues 193–215 (FLWWVVFYLKPIVTNLYLGCLAL). Topologically, residues 216–245 (ETLVFSLSVFLALGNSFYFMVGDMVLGAVN) are virion surface. A helical transmembrane segment spans residues 246 to 266 (LFLVLPIFWYILTEVWLASFL). Position 267 (Arg267) is a topological domain, intravirion. Residues 268-288 (HNFGFYCGMFIASIILILPLV) form a helical membrane-spanning segment. Topologically, residues 289–299 (RYEAVFVSAKL) are virion surface. Residues 300–320 (HTTVAINVAIIPILCSVAMLI) form a helical membrane-spanning segment. Residues 321–405 (RICRIFKSMR…TTDSEEEIFP (85 aa)) are Intravirion-facing. Positions 346 to 405 (LESEPRPRPSRTPSPGRNRRRSSTSSSSSRSTRRQRPVSTQALISSVLPMTTDSEEEIFP) are disordered. Residues 386–397 (QALISSVLPMTT) show a composition bias toward polar residues.

The protein belongs to the herpesviridae glycoprotein M family. In terms of assembly, interacts (via N-terminus) with gN (via N-terminus). The gM-gN heterodimer forms the gCII complex.

The protein localises to the virion membrane. It localises to the host Golgi apparatus. It is found in the host trans-Golgi network. The protein resides in the host endosome membrane. Its subcellular location is the host nucleus inner membrane. Envelope glycoprotein important for virion assembly and egress. Plays a role in the correct incorporation of gH-gL into virion membrane. Directs the glycoprotein N (gN) to the host trans-Golgi network. In Homo sapiens (Human), this protein is Envelope glycoprotein M.